The primary structure comprises 692 residues: MFNKVEADIDGKLISIETGKLAKQASGSIVISCGGTVVLVTVVGAKTSNPNVDFLPLTIEYQEKFSAVGRVPGNYFRREIGRPSDQEVLTCRIIDRPLRPLFPEGYRSETQVIATVLSADQVNSPDVLALTGASAALSISHIPFAGPVAGGRIAYIDGKYVLNPTFAELESSSMDLMVACTRNAIVMVEGKADELSEDEILGAIFFAFENLQPLINLQDELQRANGLEKIVVESPVIDAELKAKVVEIAAAGMQKVYTTVDKLERGKVYDDLKKEVVAQLDTEEGLRASEISSLLSDFKKTYLREKTVNTGVRIGGRAWDEIRDISSETEYLPKTHGSALFTRGETQALVTATLGSERDKQRVETLNGETSRRFMLHYNFPPYCVGEARFLRGPSRRDIGHGTLATRGLEAVLPSEEDFPYAIRVVSEILESNGSSSMASVCGGSMAMMDAGVPLKRPVSGIAMGLIKEGEGVAILSDILGDEDHLGDMDFKVVGTCDGITALQMDIKIDGVSRDIMSNALDQAKRGRMHILEEMSKGIAEARAEVVEHAPKYFIHKISQDKIRDIIGPGGKIIKELSAQYDAKIEVDDSGLVKMFVANGALAEALVERVKSITAEVEVGAVYTGKVKTIKDFGAFVEILPGTDGLVHISELALERVKDVTDVVNEGDTIEVKVLDVDNRGRIRLSRKALLG.

Mg(2+)-binding residues include aspartate 484 and aspartate 490. One can recognise a KH domain in the interval 551–614 (PKYFIHKISQ…ALVERVKSIT (64 aa)). The region spanning 620-688 (GAVYTGKVKT…NRGRIRLSRK (69 aa)) is the S1 motif domain.

Belongs to the polyribonucleotide nucleotidyltransferase family. The cofactor is Mg(2+).

The protein localises to the cytoplasm. It carries out the reaction RNA(n+1) + phosphate = RNA(n) + a ribonucleoside 5'-diphosphate. Functionally, involved in mRNA degradation. Catalyzes the phosphorolysis of single-stranded polyribonucleotides processively in the 3'- to 5'-direction. The polypeptide is Polyribonucleotide nucleotidyltransferase (Desulfotalea psychrophila (strain LSv54 / DSM 12343)).